Here is a 360-residue protein sequence, read N- to C-terminus: Diacylglycerol O-acyltransferase 3 (360 aa).

Residues 153-182 (KAKAMKKMTEMDSESSSSSESSDSDCDKGK) are disordered. [2Fe-2S] cluster is bound by residues cysteine 265, cysteine 270, cysteine 298, and cysteine 302.

It belongs to the diacylglycerol acyltransferase family. [2Fe-2S] cluster is required as a cofactor.

It carries out the reaction an acyl-CoA + a 1,2-diacyl-sn-glycerol = a triacyl-sn-glycerol + CoA. Its pathway is glycerolipid metabolism; triacylglycerol biosynthesis. Functionally, involved in triacylglycerol (TAG) biosynthesis. Catalyzes the acylation of the sn-3 hydroxy group of sn-1,2-diacylglycerol using acyl-CoA. May preferentially use linolenoyl-CoA as substrate and to a lesser extent linoleoyl-CoA. May contribute to the active recycling of linoleate and linolenate into TAG when seed oil breakdown is blocked. The polypeptide is Diacylglycerol O-acyltransferase 3 (Arabidopsis thaliana (Mouse-ear cress)).